The following is a 126-amino-acid chain: Small ribosomal subunit protein uS12 (126 aa).

3-methylthioaspartic acid is present on Asp89. The interval 106 to 126 is disordered; the sequence is GVRERRRSRSKYGAKMPRSAA.

The protein belongs to the universal ribosomal protein uS12 family. As to quaternary structure, part of the 30S ribosomal subunit. Contacts proteins S8 and S17. May interact with IF1 in the 30S initiation complex.

Functionally, with S4 and S5 plays an important role in translational accuracy. Its function is as follows. Interacts with and stabilizes bases of the 16S rRNA that are involved in tRNA selection in the A site and with the mRNA backbone. Located at the interface of the 30S and 50S subunits, it traverses the body of the 30S subunit contacting proteins on the other side and probably holding the rRNA structure together. The combined cluster of proteins S8, S12 and S17 appears to hold together the shoulder and platform of the 30S subunit. This Tremblaya princeps protein is Small ribosomal subunit protein uS12.